We begin with the raw amino-acid sequence, 84 residues long: ATP synthase subunit c (84 aa).

Helical transmembrane passes span 10 to 30 (IAVG…FALL) and 53 to 73 (FIIA…ALLF).

It belongs to the ATPase C chain family. As to quaternary structure, F-type ATPases have 2 components, F(1) - the catalytic core - and F(0) - the membrane proton channel. F(1) has five subunits: alpha(3), beta(3), gamma(1), delta(1), epsilon(1). F(0) has three main subunits: a(1), b(2) and c(10-14). The alpha and beta chains form an alternating ring which encloses part of the gamma chain. F(1) is attached to F(0) by a central stalk formed by the gamma and epsilon chains, while a peripheral stalk is formed by the delta and b chains.

It localises to the cell inner membrane. Functionally, f(1)F(0) ATP synthase produces ATP from ADP in the presence of a proton or sodium gradient. F-type ATPases consist of two structural domains, F(1) containing the extramembraneous catalytic core and F(0) containing the membrane proton channel, linked together by a central stalk and a peripheral stalk. During catalysis, ATP synthesis in the catalytic domain of F(1) is coupled via a rotary mechanism of the central stalk subunits to proton translocation. In terms of biological role, key component of the F(0) channel; it plays a direct role in translocation across the membrane. A homomeric c-ring of between 10-14 subunits forms the central stalk rotor element with the F(1) delta and epsilon subunits. The chain is ATP synthase subunit c from Vibrio alginolyticus.